Here is a 697-residue protein sequence, read N- to C-terminus: Elongation factor G (697 aa).

Residues 10–290 (THFRNIGIAA…AVVDYLPSPL (281 aa)) form the tr-type G domain. GTP contacts are provided by residues 19–26 (AHIDAGKT), 89–93 (DTPGH), and 143–146 (NKMD).

It belongs to the TRAFAC class translation factor GTPase superfamily. Classic translation factor GTPase family. EF-G/EF-2 subfamily.

It is found in the cytoplasm. Catalyzes the GTP-dependent ribosomal translocation step during translation elongation. During this step, the ribosome changes from the pre-translocational (PRE) to the post-translocational (POST) state as the newly formed A-site-bound peptidyl-tRNA and P-site-bound deacylated tRNA move to the P and E sites, respectively. Catalyzes the coordinated movement of the two tRNA molecules, the mRNA and conformational changes in the ribosome. The protein is Elongation factor G of Deinococcus deserti (strain DSM 17065 / CIP 109153 / LMG 22923 / VCD115).